Consider the following 57-residue polypeptide: uncharacterized protein (57 aa).

Residues 1 to 57 form a disordered region; that stretch reads MPHYVVVKSPMRRRRSPRRRSPRVCYSPRRVACSPRRRSPRRRSPRRRSPRRSIVVY. Residues 10-22 show a composition bias toward basic residues; sequence PMRRRRSPRRRSP. Residues 23 to 34 are compositionally biased toward low complexity; sequence RVCYSPRRVACS. Basic residues predominate over residues 35–51; the sequence is PRRRSPRRRSPRRRSPR.

This is an uncharacterized protein from Acheta domesticus (House cricket).